The sequence spans 621 residues: tRNA 5-methylaminomethyl-2-thiouridine biosynthesis bifunctional protein MnmC (621 aa).

Residues 1–222 (MKNANLSFKG…KRQMSSAVLE (222 aa)) are tRNA (mnm(5)s(2)U34)-methyltransferase. Residues 250–621 (IGTGVAGLAT…LIRKLKKGLK (372 aa)) are FAD-dependent cmnm(5)s(2)U34 oxidoreductase.

The protein in the N-terminal section; belongs to the methyltransferase superfamily. tRNA (mnm(5)s(2)U34)-methyltransferase family. In the C-terminal section; belongs to the DAO family. The cofactor is FAD.

The protein localises to the cytoplasm. It catalyses the reaction 5-aminomethyl-2-thiouridine(34) in tRNA + S-adenosyl-L-methionine = 5-methylaminomethyl-2-thiouridine(34) in tRNA + S-adenosyl-L-homocysteine + H(+). Functionally, catalyzes the last two steps in the biosynthesis of 5-methylaminomethyl-2-thiouridine (mnm(5)s(2)U) at the wobble position (U34) in tRNA. Catalyzes the FAD-dependent demodification of cmnm(5)s(2)U34 to nm(5)s(2)U34, followed by the transfer of a methyl group from S-adenosyl-L-methionine to nm(5)s(2)U34, to form mnm(5)s(2)U34. This is tRNA 5-methylaminomethyl-2-thiouridine biosynthesis bifunctional protein MnmC from Campylobacter concisus (strain 13826).